Reading from the N-terminus, the 452-residue chain is Pre-mRNA-splicing factor prp46 (452 aa).

Over residues 61–70 the composition is skewed to low complexity; sequence AAKQAQAAAA. Positions 61–129 are disordered; sequence AAKQAQAAAA…SATRQQPPEW (69 aa). The segment covering 114–125 has biased composition (polar residues); sequence SLIQRPSATRQQ. WD repeat units follow at residues 141 to 180, 183 to 222, 225 to 264, 267 to 308, 310 to 349, 350 to 388, and 399 to 438; these read GHLG…LRLT, GHIS…VIRH, GHLS…NIHV, GHTG…GVLT, HKKG…QNFE, GHNA…RYQT, and EAEA…TPET. A disordered region spans residues 432–452; that stretch reads DQATPETHPVTWAPTLGRQRY.

This sequence belongs to the WD repeat PRL1/PRL2 family. Associated with the spliceosome.

The protein localises to the cytoplasm. The protein resides in the nucleus. Its function is as follows. Involved in pre-mRNA splicing and required for cell cycle progression at G2/M. This Emericella nidulans (strain FGSC A4 / ATCC 38163 / CBS 112.46 / NRRL 194 / M139) (Aspergillus nidulans) protein is Pre-mRNA-splicing factor prp46 (prp46).